Here is a 446-residue protein sequence, read N- to C-terminus: Phosphoglucosamine mutase (446 aa).

S100 (phosphoserine intermediate) is an active-site residue. Residues S100, D239, D241, and D243 each contribute to the Mg(2+) site. S100 carries the phosphoserine modification.

This sequence belongs to the phosphohexose mutase family. The cofactor is Mg(2+). Post-translationally, activated by phosphorylation.

It carries out the reaction alpha-D-glucosamine 1-phosphate = D-glucosamine 6-phosphate. Its function is as follows. Catalyzes the conversion of glucosamine-6-phosphate to glucosamine-1-phosphate. The sequence is that of Phosphoglucosamine mutase from Oceanobacillus iheyensis (strain DSM 14371 / CIP 107618 / JCM 11309 / KCTC 3954 / HTE831).